Consider the following 233-residue polypeptide: Large ribosomal subunit protein uL1 (233 aa).

This sequence belongs to the universal ribosomal protein uL1 family. In terms of assembly, part of the 50S ribosomal subunit.

Functionally, binds directly to 23S rRNA. The L1 stalk is quite mobile in the ribosome, and is involved in E site tRNA release. In terms of biological role, protein L1 is also a translational repressor protein, it controls the translation of the L11 operon by binding to its mRNA. The sequence is that of Large ribosomal subunit protein uL1 from Parvibaculum lavamentivorans (strain DS-1 / DSM 13023 / NCIMB 13966).